The primary structure comprises 145 residues: Basic phospholipase A2 KPA2 (145 aa).

A signal peptide spans methionine 1–alanine 19. A propeptide spanning residues alanine 20–leucine 27 is cleaved from the precursor. 7 disulfides stabilise this stretch: cysteine 38–cysteine 97, cysteine 52–cysteine 144, cysteine 54–cysteine 70, cysteine 69–cysteine 125, cysteine 76–cysteine 118, cysteine 86–cysteine 111, and cysteine 104–cysteine 116. 3 residues coordinate Ca(2+): tyrosine 53, glycine 55, and glycine 57. Histidine 73 is a catalytic residue. Position 74 (aspartate 74) interacts with Ca(2+). The active site involves aspartate 119.

It belongs to the phospholipase A2 family. Group I subfamily. D49 sub-subfamily. In terms of assembly, monomer. Requires Ca(2+) as cofactor. Expressed by the venom gland.

The protein localises to the secreted. The catalysed reaction is a 1,2-diacyl-sn-glycero-3-phosphocholine + H2O = a 1-acyl-sn-glycero-3-phosphocholine + a fatty acid + H(+). In terms of biological role, snake venom phospholipase A2 (PLA2) that shows anticoagulant and neurotoxic activities. PLA2 catalyzes the calcium-dependent hydrolysis of the 2-acyl groups in 3-sn-phosphoglycerides. The sequence is that of Basic phospholipase A2 KPA2 from Bungarus caeruleus (Indian krait).